A 520-amino-acid polypeptide reads, in one-letter code: Sensory neuron membrane protein 2 (520 aa).

Residues 1-7 (MLGKHSK) are Cytoplasmic-facing. The chain crosses the membrane as a helical span at residues 8–28 (IFFGVSLIFLVIAIVLASWGF). The Extracellular segment spans residues 29–468 (QKIVNKQIQK…DSHKLLGYVE (440 aa)). N44, N67, N104, N228, N271, N313, and N342 each carry an N-linked (GlcNAc...) asparagine glycan. 3 disulfides stabilise this stretch: C267/C337, C298/C361, and C339/C350. Residues 469-489 (VAKWFLLTIAIISVIASAVAV) form a helical membrane-spanning segment. Over 490–520 (ARANALLSWPRNSNSVSFILGPSVTQVNKGN) the chain is Cytoplasmic.

It belongs to the CD36 family. In terms of tissue distribution, localizes to cells surrounding the sensory neurons in the antenna. Associate in a ratio of 2:1 with the neurons expressing the other subtype SNMP1.

It localises to the cell membrane. Its function is as follows. Plays an olfactory role that is not restricted to pheromone sensitivity. May play a role in the elimination of lipophilic components from the sensillum lymph. The polypeptide is Sensory neuron membrane protein 2 (Heliothis virescens (Tobacco budworm moth)).